Here is a 954-residue protein sequence, read N- to C-terminus: MITFDSSALLSYYQARTGLTGAGASGVSASPSRSKAVVPNAPWLSNTSPPASDLVRTALAGRKFIDEGANTSSLKGVSADYKKLFATYQALNTLSALATRAGEKGVTDGEVSRLQTALSKGLGEISGYVQNLSLDQMRLTTGAVMTSDKGTVGVPKATYSYTTDTLYTGQFDDEIPRFKGNVSFDISVKSFGVTSTVTMDLSEMGATPRTMSNVVSYMNGKMKAAGFNTDFSVQRTVGQERTVQVNGKPVKLPATGDDFALRVNGDSVEQLTFSAPTTAPAVYVTTRAGDPDPDKKAETDDGVFETTLTKYSAAGTAGGPGAGAPGGKVFSETLQGTISSVRKSVTGADGSVYMLADVSTAVDGKTDINGQPIKGESDVALLKYDSAGHLLYARSLGATDNASGLSLAVASDGSVAVAGSVSGRLQGAVNGPINNSDSSSTTDSFVTRYDAKGDEQWTVRRGGLQEDEATALAFGSNGVLYVGGRSKSDLPGSVGTDPSGGWDAYLSAFATDGNGQPKALFTQKFGTAENDSVSDIVVNGSQVIVGSKENGQAMLRSFEVTPSVVTENVTKLNQYGAYESVPVTYTKTATLTAGATRDLGSLKGGEIAGLKIDGGQLYVGGYTANNLMSIGGATTAPSGGMDGFVGRMSLDISDTTGDTLTYYGGTGDDTVTGFAVSNGTAWLVGAAGKNLDGEETVGTKDGYVAQVNVGTGAVDWSQRVTGKDGYATPTSVAVSSSGASALDAFGLPGGTMDFSQSNRIVSATAARAGDTFQIRTRERGALTTVTIDANDTLETLADKIKRASGFRAKVETATNGNSRVLKISPASNNATIEIMPGKGGTDVLRSLGIAGGVVRATKTEDGKTVSADGSGPVYGLQLPPELDLTTEAGRKNANMVITRAMSQVRTAYREIADTALGIKNDGTTGSGKTGGTVPAYLKNQVANYQAALNRLTGG.

Functions in trans to modulate the level of transcription of the flagellin genes and several genes encoding chemotaxis functions. It is itself temporally controlled. In Caulobacter vibrioides (strain ATCC 19089 / CIP 103742 / CB 15) (Caulobacter crescentus), this protein is Regulatory protein FlaEY (flaEY).